The following is a 296-amino-acid chain: Adrenocorticotropic hormone receptor (296 aa).

Residues 1-23 (MKHIINSYEHTNDTARNNSDCPD) lie on the Extracellular side of the membrane. N12 and N17 each carry an N-linked (GlcNAc...) asparagine glycan. Cystine bridges form between C21–C253 and C245–C251. A helical transmembrane segment spans residues 24–49 (VVLPEEIFFTISVIGILENLIVLLAV). Over 50-58 (IKNKNLQSP) the chain is Cytoplasmic. A helical membrane pass occupies residues 59–79 (MYFFICSLAISDMLGSLYKIL). Residues 80–104 (ENILIMFRNMGYLKPRGSFESTADD) lie on the Extracellular side of the membrane. Residues 105-126 (IIDCMFILSLLGSIFSLSVIAA) traverse the membrane as a helical segment. Topologically, residues 127–147 (DRYITIFHALQYHSIVTMRRT) are cytoplasmic. A helical transmembrane segment spans residues 148–168 (IITLTIIWMFCTGSGITMVIF). Residues 169–180 (SHHIPTVLTFTS) lie on the Extracellular side of the membrane. A helical transmembrane segment spans residues 181 to 199 (LFPLMLVFILCLYIHMFLL). At 200-217 (ARSHARKISTLPRTNMKG) the chain is on the cytoplasmic side. The chain crosses the membrane as a helical span at residues 218–244 (AMTLTILLGVFIFCWAPFVLHVLLMTF). Topologically, residues 245 to 256 (CPNNPYCVCYMS) are extracellular. Residues 257–278 (LFQVNGMLIMCNAVIDPFIYAF) traverse the membrane as a helical segment. Residues 279 to 296 (RSPELRDAFKRMLFCNRY) lie on the Cytoplasmic side of the membrane. A lipid anchor (S-palmitoyl cysteine) is attached at C293.

Belongs to the G-protein coupled receptor 1 family. In terms of assembly, homodimer. Interacts with corticotropin (ACTH). Interacts with MRAP; this interaction targets MC2R to the plasma membrane. Interacts with MRAP2; competing with MRAP for binding to MC2R and impairing the binding of corticotropin (ACTH). Post-translationally, ubiquitinated by MGRN1 that may be involved in post-endocytic trafficking and/or degradation of internalized receptor.

It is found in the cell membrane. In terms of biological role, hormone receptor primarily expressed in adrenal cortex that plays a key role in regulating adrenocortical function. Upon corticotropin (ACTH) binding, facilitates the release of adrenal glucocorticoids, including cortisol and corticosterone. In addition, MC2R is required for fetal and neonatal adrenal gland development. Mechanistically, activates adenylate cyclase (cAMP), the MAPK cascade as well as the cAMP-dependent protein kinase A pathway leading to steroidogenic factor 1/NR5A1-mediated transcriptional activation. This chain is Adrenocorticotropic hormone receptor (Mc2r), found in Mus musculus (Mouse).